The primary structure comprises 1026 residues: Multidrug resistance protein MdtC (1026 aa).

The next 10 helical transmembrane spans lie at 12–34 (VATLLLTLAIALCGVLGFRLLPV), 336–353 (QSLIIAVALVILVVFLFL), 360–382 (AIPALAVPVSLIGTFAAMYLCGF), 431–450 (VGFTVLSMSLSLVAVFLPLL), 463–485 (FAVTLSVAIMISLLISLTLTPML), 525–547 (HARWVLLLLLGTIALNVWLYISI), 853–875 (LLLILAAIITVYIVLGILYESYV), 895–917 (LEWFGAPFSLVALIGIMLLIGIV), 948–970 (LLRFRPIMMTTLAALFGALPLVL), and 985–1007 (TIVGGLLMSQVLTLYTTPVVYLF).

This sequence belongs to the resistance-nodulation-cell division (RND) (TC 2.A.6) family. MdtC subfamily. As to quaternary structure, part of a tripartite efflux system composed of MdtA, MdtB and MdtC. MdtC forms a heteromultimer with MdtB.

The protein localises to the cell inner membrane. The protein is Multidrug resistance protein MdtC of Pectobacterium atrosepticum (strain SCRI 1043 / ATCC BAA-672) (Erwinia carotovora subsp. atroseptica).